Consider the following 88-residue polypeptide: Alpha-latrotoxin associated low molecular weight protein (88 aa).

Residues 1-18 (MSKLFFVAFLCLIISVFA) form the signal peptide.

Belongs to the arthropod CHH/MIH/GIH/VIH hormone family. As to expression, expressed by the venom gland.

It is found in the secreted. Functionally, may increase the toxicity of alpha-latrotoxin and/or other venom components. Is non-toxic to mice and to the cockroach Periplaneta americana. The polypeptide is Alpha-latrotoxin associated low molecular weight protein (Latrodectus hesperus (Western black widow spider)).